Here is a 467-residue protein sequence, read N- to C-terminus: tRNA-2-methylthio-N(6)-dimethylallyladenosine synthase (467 aa).

One can recognise an MTTase N-terminal domain in the interval Pro-2–Lys-118. [4Fe-4S] cluster-binding residues include Cys-11, Cys-47, Cys-81, Cys-159, Cys-163, and Cys-166. A Radical SAM core domain is found at Thr-145–Glu-379. The 64-residue stretch at Gln-382–Ile-445 folds into the TRAM domain.

It belongs to the methylthiotransferase family. MiaB subfamily. Monomer. [4Fe-4S] cluster serves as cofactor.

It is found in the cytoplasm. It carries out the reaction N(6)-dimethylallyladenosine(37) in tRNA + (sulfur carrier)-SH + AH2 + 2 S-adenosyl-L-methionine = 2-methylsulfanyl-N(6)-dimethylallyladenosine(37) in tRNA + (sulfur carrier)-H + 5'-deoxyadenosine + L-methionine + A + S-adenosyl-L-homocysteine + 2 H(+). Catalyzes the methylthiolation of N6-(dimethylallyl)adenosine (i(6)A), leading to the formation of 2-methylthio-N6-(dimethylallyl)adenosine (ms(2)i(6)A) at position 37 in tRNAs that read codons beginning with uridine. This chain is tRNA-2-methylthio-N(6)-dimethylallyladenosine synthase, found in Methylacidiphilum infernorum (isolate V4) (Methylokorus infernorum (strain V4)).